We begin with the raw amino-acid sequence, 937 residues long: Isoleucine--tRNA ligase (937 aa).

The 'HIGH' region motif lies at 58–68; that stretch reads PYANGSIHIGH. E561 contributes to the L-isoleucyl-5'-AMP binding site. Residues 602–606 carry the 'KMSKS' region motif; the sequence is KMSKS. K605 is a binding site for ATP. 4 residues coordinate Zn(2+): C900, C903, C920, and C923.

It belongs to the class-I aminoacyl-tRNA synthetase family. IleS type 1 subfamily. As to quaternary structure, monomer. Zn(2+) serves as cofactor.

It localises to the cytoplasm. The enzyme catalyses tRNA(Ile) + L-isoleucine + ATP = L-isoleucyl-tRNA(Ile) + AMP + diphosphate. In terms of biological role, catalyzes the attachment of isoleucine to tRNA(Ile). As IleRS can inadvertently accommodate and process structurally similar amino acids such as valine, to avoid such errors it has two additional distinct tRNA(Ile)-dependent editing activities. One activity is designated as 'pretransfer' editing and involves the hydrolysis of activated Val-AMP. The other activity is designated 'posttransfer' editing and involves deacylation of mischarged Val-tRNA(Ile). The sequence is that of Isoleucine--tRNA ligase from Pectobacterium atrosepticum (strain SCRI 1043 / ATCC BAA-672) (Erwinia carotovora subsp. atroseptica).